A 111-amino-acid chain; its full sequence is MSAMYAKRCAALVLLVVTVGLVNATENYMDYGEEMAEKTPAENIHELYRLLLQRNTLDNAGFGGIPLEHLMIRKSQRSPSLRLRFGRSGPHVSARALPRPMGAVAGYDDNN.

An N-terminal signal peptide occupies residues 1–24 (MSAMYAKRCAALVLLVVTVGLVNA). A propeptide spanning residues 25-76 (TENYMDYGEEMAEKTPAENIHELYRLLLQRNTLDNAGFGGIPLEHLMIRKSQ) is cleaved from the precursor. Phe85 is modified (phenylalanine amide). Positions 88 to 111 (SGPHVSARALPRPMGAVAGYDDNN) are excised as a propeptide.

In terms of tissue distribution, expressed throughout the central nervous system (at protein level).

Its subcellular location is the secreted. Functionally, plays a role in controlling food intake and regulating body size. The chain is Short neuropeptide F from Camponotus floridanus (Florida carpenter ant).